The primary structure comprises 480 residues: Ribulose bisphosphate carboxylase large chain (480 aa).

Residues 1–2 constitute a propeptide that is removed on maturation; the sequence is MS. An N-acetylproline modification is found at Pro-3. Lys-14 bears the N6,N6,N6-trimethyllysine mark. Asn-123 and Thr-173 together coordinate substrate. Lys-175 functions as the Proton acceptor in the catalytic mechanism. Lys-177 is a substrate binding site. 3 residues coordinate Mg(2+): Lys-201, Asp-203, and Glu-204. The residue at position 201 (Lys-201) is an N6-carboxylysine. Catalysis depends on His-294, which acts as the Proton acceptor. 3 residues coordinate substrate: Arg-295, His-327, and Ser-379.

Belongs to the RuBisCO large chain family. Type I subfamily. In terms of assembly, heterohexadecamer of 8 large chains and 8 small chains; disulfide-linked. The disulfide link is formed within the large subunit homodimers. It depends on Mg(2+) as a cofactor. Post-translationally, the disulfide bond which can form in the large chain dimeric partners within the hexadecamer appears to be associated with oxidative stress and protein turnover.

The protein localises to the plastid. It localises to the chloroplast. The catalysed reaction is 2 (2R)-3-phosphoglycerate + 2 H(+) = D-ribulose 1,5-bisphosphate + CO2 + H2O. It carries out the reaction D-ribulose 1,5-bisphosphate + O2 = 2-phosphoglycolate + (2R)-3-phosphoglycerate + 2 H(+). RuBisCO catalyzes two reactions: the carboxylation of D-ribulose 1,5-bisphosphate, the primary event in carbon dioxide fixation, as well as the oxidative fragmentation of the pentose substrate in the photorespiration process. Both reactions occur simultaneously and in competition at the same active site. This chain is Ribulose bisphosphate carboxylase large chain, found in Mollugo verticillata (Green carpetweed).